Here is a 220-residue protein sequence, read N- to C-terminus: Mediator of RNA polymerase II transcription subunit 19 (220 aa).

The tract at residues Ala-171–Glu-220 is disordered. Residues Gly-178–Asn-189 show a composition bias toward low complexity. Over residues Ser-208 to Glu-220 the composition is skewed to basic and acidic residues.

It belongs to the Mediator complex subunit 19 family. Component of the Mediator complex, which is composed of at least 21 subunits that form three structurally distinct submodules. The Mediator head module contains MED6, MED8, MED11, SRB4/MED17, SRB5/MED18, ROX3/MED19, SRB2/MED20 and SRB6/MED22, the middle module contains MED1, MED4, NUT1/MED5, MED7, CSE2/MED9, NUT2/MED10, SRB7/MED21 and SOH1/MED31, and the tail module contains MED2, PGD1/MED3, RGR1/MED14, GAL11/MED15 and SIN4/MED16. The head and the middle modules interact directly with RNA polymerase II, whereas the elongated tail module interacts with gene-specific regulatory proteins.

It localises to the nucleus. In terms of biological role, component of the Mediator complex, a coactivator involved in the regulated transcription of nearly all RNA polymerase II-dependent genes. Mediator functions as a bridge to convey information from gene-specific regulatory proteins to the basal RNA polymerase II transcription machinery. The Mediator complex, having a compact conformation in its free form, is recruited to promoters by direct interactions with regulatory proteins and serves for the assembly of a functional preinitiation complex with RNA polymerase II and the general transcription factors. The Mediator complex unfolds to an extended conformation and partially surrounds RNA polymerase II, specifically interacting with the unphosphorylated form of the C-terminal domain (CTD) of RNA polymerase II. The Mediator complex dissociates from the RNA polymerase II holoenzyme and stays at the promoter when transcriptional elongation begins. This Saccharomyces cerevisiae (strain ATCC 204508 / S288c) (Baker's yeast) protein is Mediator of RNA polymerase II transcription subunit 19 (ROX3).